The sequence spans 355 residues: Peptide chain release factor 1 (355 aa).

The residue at position 231 (glutamine 231) is an N5-methylglutamine.

Belongs to the prokaryotic/mitochondrial release factor family. Methylated by PrmC. Methylation increases the termination efficiency of RF1.

It localises to the cytoplasm. In terms of biological role, peptide chain release factor 1 directs the termination of translation in response to the peptide chain termination codons UAG and UAA. In Erythrobacter litoralis (strain HTCC2594), this protein is Peptide chain release factor 1.